The primary structure comprises 381 residues: Creatine kinase B-type (381 aa).

A Phosphagen kinase N-terminal domain is found at 11–98 (KMKYSVDDEY…FDPVIEDRHG (88 aa)). V72 serves as a coordination point for creatine. Residues 125–367 (YVLSSRVRTG…KLLIEMEKRL (243 aa)) form the Phosphagen kinase C-terminal domain. ATP is bound by residues 128 to 132 (SSRVR), R130, R132, and H191. E232 contacts creatine. R236 serves as a coordination point for ATP. Phosphothreonine; by autocatalysis is present on T282. S285 contributes to the creatine binding site. S285 carries the phosphoserine; by autocatalysis modification. Position 289 is a phosphothreonine; by autocatalysis (T289). ATP is bound by residues R292, R320, 320–325 (RGTGGV), and D335.

This sequence belongs to the ATP:guanido phosphotransferase family. Dimer of identical or non-identical chains, which can be either B (brain type) or M (muscle type). With MM being the major form in skeletal muscle and myocardium, MB existing in myocardium, and BB existing in many tissues, especially brain. In terms of processing, ba-CK and Bb-CK are phosphorylated. The N-terminus of BA-CK is blocked. Expressed in almost all tissues and found enriched in various region of the brain, retina, heart, gizzard, gut and sperm.

The protein resides in the cytoplasm. The protein localises to the cytosol. It is found in the mitochondrion. It localises to the cell membrane. The catalysed reaction is creatine + ATP = N-phosphocreatine + ADP + H(+). Functionally, reversibly catalyzes the transfer of phosphate between ATP and various phosphogens (e.g. creatine phosphate). Creatine kinase isoenzymes play a central role in energy transduction in tissues with large, fluctuating energy demands, such as skeletal muscle, heart, brain and spermatozoa. This chain is Creatine kinase B-type, found in Gallus gallus (Chicken).